The chain runs to 350 residues: Phenylalanine--tRNA ligase alpha subunit (350 aa).

A Mg(2+)-binding site is contributed by Glu257.

Belongs to the class-II aminoacyl-tRNA synthetase family. Phe-tRNA synthetase alpha subunit type 1 subfamily. Tetramer of two alpha and two beta subunits. Requires Mg(2+) as cofactor.

Its subcellular location is the cytoplasm. It catalyses the reaction tRNA(Phe) + L-phenylalanine + ATP = L-phenylalanyl-tRNA(Phe) + AMP + diphosphate + H(+). In Listeria welshimeri serovar 6b (strain ATCC 35897 / DSM 20650 / CCUG 15529 / CIP 8149 / NCTC 11857 / SLCC 5334 / V8), this protein is Phenylalanine--tRNA ligase alpha subunit.